Here is a 29-residue protein sequence, read N- to C-terminus: Cytochrome b6-f complex subunit 8 (29 aa).

The chain crosses the membrane as a helical span at residues 3 to 23 (IVGIAWAALMVVFTFSLSLVV).

This sequence belongs to the PetN family. As to quaternary structure, the 4 large subunits of the cytochrome b6-f complex are cytochrome b6, subunit IV (17 kDa polypeptide, PetD), cytochrome f and the Rieske protein, while the 4 small subunits are PetG, PetL, PetM and PetN. The complex functions as a dimer.

It is found in the plastid. Its subcellular location is the chloroplast thylakoid membrane. Component of the cytochrome b6-f complex, which mediates electron transfer between photosystem II (PSII) and photosystem I (PSI), cyclic electron flow around PSI, and state transitions. This Cryptomeria japonica (Japanese cedar) protein is Cytochrome b6-f complex subunit 8.